A 511-amino-acid chain; its full sequence is MSRNPFLDPTLQEILQVIKPTRADRDTRITVIDQLRDVLQSVECLRGATVQPFGSFVSNLFTRWGDLDISVDLFSGSSILFTGKKQKQTLLGHLLRALRASGLWYKLQFVIHARVPILKVVSGHQRISCDISIDNLDGLLKSRFLFWISEIDGRFRDLVLLVKEWAKAHNINDSKTGTFNSYSLSLLVIFHFQTCVPAILPPLRVIYPKSAVDDLTGVRKTAEESIAQVTAANIARFKSERAKSVNRSSLSELLVSFFAKFSDINVKAQEFGVCPFTGRWETISSNTTWLPKTYSLFVEDPFEQPVNAARSVSRRNLDRIAQVFQITSRRLVSECNRNSIIGILTGQHIQESLYRTISLPSQHHANGMHNVRNLHGQARPQNQQMQQNWSQSYNTPNPPHWPPLTQSRPQQNWTQNNPRNLQGQPPVQGQTWPVITQTQTQQKSPYKSGNRPLKNTSAGSSQNQGHIGKPSGHMNGVNSARPAYTNGVNSARPPSKIPSQGGQIWRPRHEQ.

The disordered stretch occupies residues 378 to 511 (ARPQNQQMQQ…GQIWRPRHEQ (134 aa)). A compositionally biased stretch (low complexity) spans 381–392 (QNQQMQQNWSQS). The span at 404-465 (LTQSRPQQNW…TSAGSSQNQG (62 aa)) shows a compositional bias: polar residues.

This sequence belongs to the DNA polymerase type-B-like family.

The protein localises to the cytoplasm. Its subcellular location is the P-body. It localises to the nucleus. It carries out the reaction RNA(n) + UTP = RNA(n)-3'-uridine ribonucleotide + diphosphate. Completely inhibited by 2'-O-methylation on the substrate RNA. Its function is as follows. Uridylates small RNAs to trigger their degradation. Catalyzes the uridylation of 5' fragments produced by AGO1-mediated cleavage of miRNA target RNAs. Acts synergistically with URT1 in unmethylated miRNA uridylation, leading to their degradation. URT1 and HESO1 prefer substrates with different 3' end nucleotides and act cooperatively to tail different forms of the same miRNAs. URT1 and HESO1 act sequentially, with URT1 mono-uridylating the miRNAs followed by their further uridylation by HESO1. URT1 and HESO1 are involved in the uridylation and clearance of RISC-generated 5' mRNA fragments. Able to act on AGO1-bound miRNAs and the uridylated species stay associated with AGO1. In Arabidopsis thaliana (Mouse-ear cress), this protein is Protein HESO1.